A 319-amino-acid polypeptide reads, in one-letter code: HPr kinase/phosphorylase (319 aa).

Residues His146 and Lys167 contribute to the active site. 161-168 is an ATP binding site; the sequence is GESGLGKS. Ser168 serves as a coordination point for Mg(2+). The active-site Proton acceptor; for phosphorylation activity. Proton donor; for dephosphorylation activity is the Asp185. The interval 209 to 218 is important for the catalytic mechanism of both phosphorylation and dephosphorylation; it reads LEVRGIGLLD. Mg(2+) is bound at residue Glu210. Arg252 is a catalytic residue. The important for the catalytic mechanism of dephosphorylation stretch occupies residues 273 to 278; it reads QVVAGR.

It belongs to the HPrK/P family. Homohexamer. The cofactor is Mg(2+).

It carries out the reaction [HPr protein]-L-serine + ATP = [HPr protein]-O-phospho-L-serine + ADP + H(+). It catalyses the reaction [HPr protein]-O-phospho-L-serine + phosphate + H(+) = [HPr protein]-L-serine + diphosphate. In terms of biological role, catalyzes the ATP- as well as the pyrophosphate-dependent phosphorylation of a specific serine residue in HPr, a phosphocarrier protein of the phosphoenolpyruvate-dependent sugar phosphotransferase system (PTS). HprK/P also catalyzes the pyrophosphate-producing, inorganic phosphate-dependent dephosphorylation (phosphorolysis) of seryl-phosphorylated HPr (P-Ser-HPr). The chain is HPr kinase/phosphorylase from Variovorax paradoxus (strain S110).